The sequence spans 1100 residues: Guanylate cyclase 2G (1100 aa).

An N-terminal signal peptide occupies residues 1 to 43; the sequence is MASRARSEPPLEHRFYGGAESHAGHSSLVLTLFVVMLMTCLEA. The Extracellular portion of the chain corresponds to 44 to 481; it reads AKLTVGFHAP…GAGMTASVTA (438 aa). Residues asparagine 55, asparagine 85, asparagine 94, asparagine 418, and asparagine 443 are each glycosylated (N-linked (GlcNAc...) asparagine). Residues 482-502 form a helical membrane-spanning segment; that stretch reads VIPTVTLLVVASAAAITGLML. The Cytoplasmic segment spans residues 503-1100; sequence WRLRGKVQNH…EEEAKVPEIL (598 aa). The region spanning 549–826 is the Protein kinase domain; sequence STVKISADCG…PAFPSIKKTL (278 aa). The Guanylate cyclase domain maps to 901–1031; sequence TIFFSDIVGF…DTVNMASRME (131 aa).

This sequence belongs to the adenylyl cyclase class-4/guanylyl cyclase family. Homooligomer. May interact with NPR1/GC-A. In terms of processing, N-glycosylated. In terms of tissue distribution, expressed in lung, kidney and skeletal muscle. Low levels in intestine.

Its subcellular location is the cell membrane. It is found in the cytoplasm. The catalysed reaction is GTP = 3',5'-cyclic GMP + diphosphate. The polypeptide is Guanylate cyclase 2G (Gucy2g) (Rattus norvegicus (Rat)).